The primary structure comprises 388 residues: Succinate--CoA ligase [ADP-forming] subunit beta (388 aa).

The region spanning 9–244 (KQLFAEFGLP…PSQEDEREAH (236 aa)) is the ATP-grasp domain. ATP-binding positions include Lys46, 53–55 (GRG), Glu99, Ser102, and Glu107. Mg(2+) contacts are provided by Asn199 and Asp213. Residues Asn264 and 321 to 323 (GIV) contribute to the substrate site.

This sequence belongs to the succinate/malate CoA ligase beta subunit family. In terms of assembly, heterotetramer of two alpha and two beta subunits. It depends on Mg(2+) as a cofactor.

The enzyme catalyses succinate + ATP + CoA = succinyl-CoA + ADP + phosphate. The catalysed reaction is GTP + succinate + CoA = succinyl-CoA + GDP + phosphate. Its pathway is carbohydrate metabolism; tricarboxylic acid cycle; succinate from succinyl-CoA (ligase route): step 1/1. Functionally, succinyl-CoA synthetase functions in the citric acid cycle (TCA), coupling the hydrolysis of succinyl-CoA to the synthesis of either ATP or GTP and thus represents the only step of substrate-level phosphorylation in the TCA. The beta subunit provides nucleotide specificity of the enzyme and binds the substrate succinate, while the binding sites for coenzyme A and phosphate are found in the alpha subunit. The polypeptide is Succinate--CoA ligase [ADP-forming] subunit beta (Aliivibrio fischeri (strain ATCC 700601 / ES114) (Vibrio fischeri)).